The chain runs to 404 residues: 4-hydroxyphenylpyruvate dioxygenase (404 aa).

2 consecutive VOC domains span residues 28 to 163 and 194 to 353; these read GYDH…FIQR and YVDH…IFTK. The Fe cation site is built by H197, H280, and E364.

The protein belongs to the 4HPPD family. It depends on Fe cation as a cofactor.

The catalysed reaction is 3-(4-hydroxyphenyl)pyruvate + O2 = homogentisate + CO2. It participates in amino-acid degradation; L-phenylalanine degradation; acetoacetate and fumarate from L-phenylalanine: step 3/6. Its function is as follows. Key enzyme in the degradation of tyrosine. This is 4-hydroxyphenylpyruvate dioxygenase (TFA) from Tetrahymena thermophila.